The primary structure comprises 133 residues: Ribosome-binding factor A (133 aa).

This sequence belongs to the RbfA family. Monomer. Binds 30S ribosomal subunits, but not 50S ribosomal subunits or 70S ribosomes.

The protein localises to the cytoplasm. Its function is as follows. One of several proteins that assist in the late maturation steps of the functional core of the 30S ribosomal subunit. Associates with free 30S ribosomal subunits (but not with 30S subunits that are part of 70S ribosomes or polysomes). Required for efficient processing of 16S rRNA. May interact with the 5'-terminal helix region of 16S rRNA. This is Ribosome-binding factor A from Trichormus variabilis (strain ATCC 29413 / PCC 7937) (Anabaena variabilis).